A 172-amino-acid polypeptide reads, in one-letter code: Large ribosomal subunit protein uL10 (172 aa).

Belongs to the universal ribosomal protein uL10 family. Part of the ribosomal stalk of the 50S ribosomal subunit. The N-terminus interacts with L11 and the large rRNA to form the base of the stalk. The C-terminus forms an elongated spine to which L12 dimers bind in a sequential fashion forming a multimeric L10(L12)X complex.

Its function is as follows. Forms part of the ribosomal stalk, playing a central role in the interaction of the ribosome with GTP-bound translation factors. This is Large ribosomal subunit protein uL10 from Ruegeria pomeroyi (strain ATCC 700808 / DSM 15171 / DSS-3) (Silicibacter pomeroyi).